The sequence spans 80 residues: AGLTKRSLFDPSCTGVFDRQLLRRLRRVCDDCFNVFREPNVSTECRSNCYNNEVFRQCMEYLLPPHLHEEHRLAVQMVGK.

3 disulfides stabilise this stretch: Cys13–Cys49, Cys29–Cys45, and Cys32–Cys58. The residue at position 78 (Val78) is a Valine amide.

The protein belongs to the arthropod CHH/MIH/GIH/VIH hormone family. In terms of tissue distribution, produced by the medulla terminalis X-organ in the eyestalks and transported to the sinus gland where they are stored and released.

It localises to the secreted. Hormone found in the sinus gland of isopods and decapods which controls the blood sugar level. Has a secretagogue action over the amylase released from the midgut gland. May act as a stress hormone and may be involved in the control of molting and reproduction. The polypeptide is Crustacean hyperglycemic hormones (Penaeus vannamei (Whiteleg shrimp)).